The sequence spans 160 residues: 2-C-methyl-D-erythritol 2,4-cyclodiphosphate synthase (160 aa).

2 residues coordinate a divalent metal cation: aspartate 11 and histidine 13. Residues 11 to 13 and 37 to 38 each bind 4-CDP-2-C-methyl-D-erythritol 2-phosphate; these read DVH and HS. Histidine 45 lines the a divalent metal cation pocket. Residues 59–61 and arginine 145 each bind 4-CDP-2-C-methyl-D-erythritol 2-phosphate; that span reads DIG.

This sequence belongs to the IspF family. Homotrimer. Requires a divalent metal cation as cofactor.

The catalysed reaction is 4-CDP-2-C-methyl-D-erythritol 2-phosphate = 2-C-methyl-D-erythritol 2,4-cyclic diphosphate + CMP. The protein operates within isoprenoid biosynthesis; isopentenyl diphosphate biosynthesis via DXP pathway; isopentenyl diphosphate from 1-deoxy-D-xylulose 5-phosphate: step 4/6. Involved in the biosynthesis of isopentenyl diphosphate (IPP) and dimethylallyl diphosphate (DMAPP), two major building blocks of isoprenoid compounds. Catalyzes the conversion of 4-diphosphocytidyl-2-C-methyl-D-erythritol 2-phosphate (CDP-ME2P) to 2-C-methyl-D-erythritol 2,4-cyclodiphosphate (ME-CPP) with a corresponding release of cytidine 5-monophosphate (CMP). This is 2-C-methyl-D-erythritol 2,4-cyclodiphosphate synthase from Neisseria meningitidis serogroup A / serotype 4A (strain DSM 15465 / Z2491).